The chain runs to 1155 residues: Probable translation initiation factor IF-2 (1155 aa).

In terms of domain architecture, DOD-type homing endonuclease spans 237-367 (FAGVMFGDGC…LSILLLRFEI (131 aa)). Residues 561 to 781 (TTETHNFIAN…VAGLAQKFLE (221 aa)) form the tr-type G domain. GTP contacts are provided by residues 634 to 638 (DTPGH) and 688 to 691 (NKID).

It belongs to the TRAFAC class translation factor GTPase superfamily. Classic translation factor GTPase family. IF-2 subfamily. Post-translationally, this protein undergoes a protein self splicing that involves a post-translational excision of the intervening region (intein) followed by peptide ligation.

Functionally, function in general translation initiation by promoting the binding of the formylmethionine-tRNA to ribosomes. Seems to function along with eIF-2. The protein is Probable translation initiation factor IF-2 (infB) of Methanocaldococcus jannaschii (strain ATCC 43067 / DSM 2661 / JAL-1 / JCM 10045 / NBRC 100440) (Methanococcus jannaschii).